A 188-amino-acid polypeptide reads, in one-letter code: UPF0398 protein ABC2016 (188 aa).

This sequence belongs to the UPF0398 family.

The polypeptide is UPF0398 protein ABC2016 (Shouchella clausii (strain KSM-K16) (Alkalihalobacillus clausii)).